Consider the following 1055-residue polypeptide: Ephrin type-B receptor 2 (1055 aa).

The N-terminal stretch at 1 to 18 (MALRRLGAALLLLPLLAA) is a signal peptide. Residues 19 to 543 (VEETLMDSTT…QTSIQEKLPL (525 aa)) lie on the Extracellular side of the membrane. The 183-residue stretch at 20–202 (EETLMDSTTA…FYRKCPRIIQ (183 aa)) folds into the Eph LBD domain. Disulfide bonds link cysteine 62–cysteine 184 and cysteine 97–cysteine 107. Residues asparagine 265, asparagine 336, asparagine 428, and asparagine 482 are each glycosylated (N-linked (GlcNAc...) asparagine). Fibronectin type-III domains lie at 324–434 (IPSA…TNQA) and 435–530 (APSA…TMTE). A helical transmembrane segment spans residues 544 to 564 (IIGSSAAGLVFLIAVVVIAIV). Topologically, residues 565-1055 (CNRRGFERAD…KESNDCSCGG (491 aa)) are cytoplasmic. In terms of domain architecture, Protein kinase spans 621–884 (VKIEQVIGAG…QIVNTLDKMI (264 aa)). ATP-binding positions include 627–635 (IGAGEFGEV) and lysine 653. Aspartate 746 (proton acceptor) is an active-site residue. Residue lysine 891 forms a Glycyl lysine isopeptide (Lys-Gly) (interchain with G-Cter in ubiquitin) linkage. One can recognise an SAM domain in the interval 913-977 (TSFNTVDEWL…LNSIQVMRAQ (65 aa)). Phosphoserine is present on residues serine 983 and valine 984. A PDZ-binding (in isoform 2) motif is present at residues 984–986 (VEG). Residues 990-1055 (ARRPRATGRT…KESNDCSCGG (66 aa)) are disordered. Residues 991 to 1002 (RRPRATGRTKRC) show a composition bias toward basic residues. Residues 1025-1049 (KKTDPGRGREIQGIFFKEDSHKESN) show a composition bias toward basic and acidic residues.

Belongs to the protein kinase superfamily. Tyr protein kinase family. Ephrin receptor subfamily. In terms of assembly, heterotetramer upon binding of the ligand. The heterotetramer is composed of an ephrin dimer and a receptor dimer. Interacts (via PDZ-binding motif) with GRIP1 and PICK1 (via PDZ domain). Interacts with ARHGEF15; mediates ARHGEF15 phosphorylation, ubiquitination and degradation by the proteasome. Interacts with AQP1; involved in endolymph production in the inner ear. Interacts with SPSB1 and SPSB4. The phosphorylated form interacts with RASA1 (via SH2 domain 1). Interacts with EFNA5. Interacts with SH2D3C. In terms of processing, autophosphorylated; ligand binding stimulates autophosphorylation on tyrosine residues. Polyubiquitinated; ligand binding stimulates ubiquitination. Ubiquitinated by RNF186 at Lys-891, mainly through 'Lys-27'-linked polyubiquitin chains. Ubiquitinated by CRL2(KLHDC2) E3 ligase complex. Post-translationally, ligand binding induces cleavage by matrix metalloproteinases (MMPs) such as MMP7/MMP9, producing an EphB2/N-terminal fragment (NTF) and a C-terminal long fragment (EphB2-LF). EphB2-LF is further cleaved by MMPs, producing EphB2/CTF1 which is further cleaved by the PS1/gamma-secretase producing EphB2/CTF2. Brain, heart, lung, kidney, placenta, pancreas, liver and skeletal muscle. Preferentially expressed in fetal brain.

It is found in the cell membrane. Its subcellular location is the cell projection. The protein resides in the axon. It localises to the dendrite. The catalysed reaction is L-tyrosyl-[protein] + ATP = O-phospho-L-tyrosyl-[protein] + ADP + H(+). Its function is as follows. Receptor tyrosine kinase which binds promiscuously transmembrane ephrin-B family ligands residing on adjacent cells, leading to contact-dependent bidirectional signaling into neighboring cells. The signaling pathway downstream of the receptor is referred to as forward signaling while the signaling pathway downstream of the ephrin ligand is referred to as reverse signaling. Functions in axon guidance during development. Involved in the guidance of commissural axons, that form a major interhemispheric connection between the 2 temporal lobes of the cerebral cortex. Also involved in guidance of contralateral inner ear efferent growth cones at the midline and of retinal ganglion cell axons to the optic disk. In addition to axon guidance, also regulates dendritic spines development and maturation and stimulates the formation of excitatory synapses. Upon activation by EFNB1, abolishes the ARHGEF15-mediated negative regulation on excitatory synapse formation. Controls other aspects of development including angiogenesis, palate development and in inner ear development through regulation of endolymph production. Forward and reverse signaling through the EFNB2/EPHB2 complex regulate movement and adhesion of cells that tubularize the urethra and septate the cloaca. May function as a tumor suppressor. May be involved in the regulation of platelet activation and blood coagulation. In Homo sapiens (Human), this protein is Ephrin type-B receptor 2 (EPHB2).